The sequence spans 93 residues: SH3 domain-binding glutamic acid-rich-like protein 3 (93 aa).

The residue at position 2 (Ser2) is an N-acetylserine. Residue Ser2 is glycosylated (O-linked (GalNAc...) serine). The Glutaredoxin domain occupies 2-93; the sequence is SGRRVYSTSV…NTLQEFLKLA (92 aa). O-linked (GalNAc...) threonine glycosylation is found at Thr9 and Thr12.

It belongs to the SH3BGR family. Homodimer. Interacts with MYO1C (via its IQ motifs); the interaction is dependent on calcium and takes place at membrane ruffles. In terms of processing, may be glycosylated.

Its subcellular location is the cytoplasm. It is found in the cytosol. It localises to the cell projection. The protein resides in the ruffle membrane. The protein localises to the nucleus. Could act as a modulator of glutaredoxin biological activity. May play a role in cytoskeleton organization. The protein is SH3 domain-binding glutamic acid-rich-like protein 3 (SH3BGRL3) of Pongo abelii (Sumatran orangutan).